We begin with the raw amino-acid sequence, 255 residues long: Small ribosomal subunit protein eS1 (255 aa).

Residues 1–18 (MAVGKNKRLSKGKKGLKK) show a composition bias toward basic residues. Residues 1-28 (MAVGKNKRLSKGKKGLKKRTQDPFSRKD) form a disordered region. Ala2 carries the post-translational modification N-acetylalanine; partial. The span at 19 to 28 (RTQDPFSRKD) shows a compositional bias: basic and acidic residues.

This sequence belongs to the eukaryotic ribosomal protein eS1 family. Component of the small ribosomal subunit. Mature ribosomes consist of a small (40S) and a large (60S) subunit. The 40S subunit contains about 33 different proteins and 1 molecule of RNA (18S). The 60S subunit contains about 49 different proteins and 3 molecules of RNA (25S, 5.8S and 5S).

It is found in the cytoplasm. In Paracoccidioides lutzii (strain ATCC MYA-826 / Pb01) (Paracoccidioides brasiliensis), this protein is Small ribosomal subunit protein eS1.